The sequence spans 563 residues: ATP-dependent RNA helicase DeaD (563 aa).

Residues 13-41 carry the Q motif motif; it reads ATFADLQIHPRVLRAIGDVGYESPTAIQA. Residues 44 to 215 form the Helicase ATP-binding domain; that stretch reads IPALMAGSDV…AKYLHDPFEV (172 aa). 57–64 serves as a coordination point for ATP; it reads AQTGTGKT. The DEAD box motif lies at 163 to 166; sequence DEAD. The 160-residue stretch at 226-385 folds into the Helicase C-terminal domain; sequence NISQSYIQVA…AQLPTVEDVN (160 aa). Disordered regions lie at residues 441-470 and 543-563; these read LMAPDPPLSRRNRDQRRDRPQRPKRRPDLT and YRPPDAARRHNGGKPRRKHVG. Basic and acidic residues predominate over residues 451–461; the sequence is RNRDQRRDRPQ. Residues 551–563 show a composition bias toward basic residues; the sequence is RHNGGKPRRKHVG.

Belongs to the DEAD box helicase family. DeaD/CsdA subfamily.

The protein resides in the cytoplasm. It carries out the reaction ATP + H2O = ADP + phosphate + H(+). In terms of biological role, DEAD-box RNA helicase involved in various cellular processes at low temperature, including ribosome biogenesis, mRNA degradation and translation initiation. The polypeptide is ATP-dependent RNA helicase DeaD (Mycobacterium tuberculosis (strain CDC 1551 / Oshkosh)).